Here is a 688-residue protein sequence, read N- to C-terminus: MFFVTRLRLRARENGFFFSKSLSFSSASVLKSDDVEGEDDAIEAEDRRRSVTDRAYWRRRIHSICAVRRNPDEALRILDGLCLRGYRPDSLNLSSVIHSLCDAGRFDEAHRRFLLFLASGFIPDERTCNVIIARLLYSRSPVSTLGVIHRLIGFKKEFVPSLTNYNRLMNQLCTIYRVIDAHKLVFDMRNRGHLPDVVTFTTLIGGYCEIRELEVAHKVFDEMRVCGIRPNSLTLSVLIGGFLKMRDVETGRKLMKELWEYMKNETDTSMKAAAFANLVDSMCREGYFNDIFEIAENMSLCESVNVEFAYGHMIDSLCRYRRNHGAARIVYIMKSKGLKPRRTSYNAIIHGLCKDGGCMRAYQLLEEGSEFEFFPSEYTYKLLMESLCKELDTGKARNVLELMLRKEGADRTRIYNIYLRGLCVMDNPTEILNVLVSMLQGDCRPDEYTLNTVINGLCKMGRVDDAMKVLDDMMTGKFCAPDAVTLNTVMCGLLAQGRAEEALDVLNRVMPENKIKPGVVAYNAVIRGLFKLHKGDEAMSVFGQLEKASVTADSTTYAIIIDGLCVTNKVDMAKKFWDDVIWPSGRHDAFVYAAFLKGLCQSGYLSDACHFLYDLADSGAIPNVVCYNTVIAECSRSGLKREAYQILEEMRKNGQAPDAVTWRILDKLHDSMDLTVERELISNPATSG.

17 PPR repeats span residues 53 to 88, 89 to 123, 124 to 158, 161 to 195, 196 to 230, 231 to 261, 271 to 305, 306 to 340, 341 to 375, 376 to 406, 411 to 445, 446 to 480, 482 to 517, 518 to 552, 553 to 583, 588 to 622, and 623 to 657; these read DRAYWRRRIHSICAVRRNPDEALRILDGLCLRGYRP, DSLNLSSVIHSLCDAGRFDEAHRRFLLFLASGFIP, DERTCNVIIARLLYSRSPVSTLGVIHRLIGFKKEF, SLTNYNRLMNQLCTIYRVIDAHKLVFDMRNRGHLP, DVVTFTTLIGGYCEIRELEVAHKVFDEMRVCGIRP, NSLTLSVLIGGFLKMRDVETGRKLMKELWEY, KAAAFANLVDSMCREGYFNDIFEIAENMSLCESVN, VEFAYGHMIDSLCRYRRNHGAARIVYIMKSKGLKP, RRTSYNAIIHGLCKDGGCMRAYQLLEEGSEFEFFP, SEYTYKLLMESLCKELDTGKARNVLELMLRK, RTRIYNIYLRGLCVMDNPTEILNVLVSMLQGDCRP, DEYTLNTVINGLCKMGRVDDAMKVLDDMMTGKFCA, DAVTLNTVMCGLLAQGRAEEALDVLNRVMPENKIKP, GVVAYNAVIRGLFKLHKGDEAMSVFGQLEKASVTA, DSTTYAIIIDGLCVTNKVDMAKKFWDDVIWP, DAFVYAAFLKGLCQSGYLSDACHFLYDLADSGAIP, and NVVCYNTVIAECSRSGLKREAYQILEEMRKNGQAP.

The protein belongs to the PPR family. P subfamily.

This Arabidopsis thaliana (Mouse-ear cress) protein is Pentatricopeptide repeat-containing protein At3g18020.